Consider the following 332-residue polypeptide: Probable endo-beta-1,4-glucanase B (332 aa).

The first 18 residues, 1–18 (MKFQSTLLLAAAAGSALA), serve as a signal peptide directing secretion. 2 N-linked (GlcNAc...) asparagine glycosylation sites follow: Asn-38 and Asn-100. The active-site Proton donor is Glu-160. Asn-212 is a glycosylation site (N-linked (GlcNAc...) asparagine). Glu-267 acts as the Nucleophile in catalysis. Residue Asn-289 is glycosylated (N-linked (GlcNAc...) asparagine).

This sequence belongs to the glycosyl hydrolase 5 (cellulase A) family.

It localises to the secreted. It carries out the reaction Endohydrolysis of (1-&gt;4)-beta-D-glucosidic linkages in cellulose, lichenin and cereal beta-D-glucans.. Has endoglucanase activity on substrates containing beta-1,4 glycosidic bonds, like in carboxymethylcellulose (CMC), hydroxyethylcellulose (HEC) and beta-glucan. Involved in the degradation of complex natural cellulosic substrates. This chain is Probable endo-beta-1,4-glucanase B (eglB), found in Aspergillus kawachii (strain NBRC 4308) (White koji mold).